Reading from the N-terminus, the 1462-residue chain is NK-tumor recognition protein (1462 aa).

The region spanning 10–175 (HFDIEINREP…ADVRVIDCGV (166 aa)) is the PPIase cyclophilin-type domain. 2 disordered regions span residues 187-591 (KKRK…TMAQ) and 607-627 (VIPLSDSPPPSRWKPGQKPWK). Over residues 198–213 (SDSSSNSSSSSESSSE) the composition is skewed to low complexity. Residues 221–240 (SRRRKHKRRPKVKRSKKRRK) are compositionally biased toward basic residues. Basic and acidic residues-rich tracts occupy residues 241 to 250 (EASSSEEPRN) and 258 to 286 (GHSERSDTNEKRSVDSSAKREKPVVRPEE). Lys-323 is covalently cross-linked (Glycyl lysine isopeptide (Lys-Gly) (interchain with G-Cter in SUMO2)). Over residues 329-345 (SGRKIKGRGTIRYHTPP) the composition is skewed to basic residues. Residues Ser-379, Ser-401, and Ser-416 each carry the phosphoserine modification. The span at 382 to 402 (KWSKGDKLSDPCSSRWDERSL) shows a compositional bias: basic and acidic residues. Residues 403-421 (SQRSRSWSYNGYYSDLSTA) show a composition bias toward polar residues. The segment covering 423–459 (HSGHHKKRRKEKKVKHKKKGKKQKHCRRHKQTKKRRI) has biased composition (basic residues). Phosphoserine is present on residues Ser-463 and Ser-471. The segment covering 497–507 (KRDWSKSDKDV) has biased composition (basic and acidic residues). Residues 524-542 (HSQSYSRGSSRSRTASKSS) are compositionally biased toward low complexity. Residues 543–568 (SHSRSRSKSRSSSKSGHRKRASKSPR) are compositionally biased toward basic residues. Residues Lys-578 and Lys-581 each participate in a glycyl lysine isopeptide (Lys-Gly) (interchain with G-Cter in SUMO2) cross-link. At Ser-613 the chain carries Phosphoserine. A Glycyl lysine isopeptide (Lys-Gly) (interchain with G-Cter in SUMO2) cross-link involves residue Lys-639. Ser-648 carries the post-translational modification Phosphoserine. Residues Lys-656 and Lys-666 each participate in a glycyl lysine isopeptide (Lys-Gly) (interchain with G-Cter in SUMO2) cross-link. A disordered region spans residues 658–1072 (TGSSSSYHKR…EEDLSGKHDT (415 aa)). Low complexity-rich tracts occupy residues 699–725 (SRSYSRSYTRSRSLASSHSRSRSPSSR) and 736–749 (SQCSRSSSYTSISS). Positions 754–774 (RAKRRLRSSGKKNSVSHKKHS) are enriched in basic residues. Residues 775-800 (SSSEKTLHSKYVKGRDRSSCVRKYSE) are compositionally biased toward basic and acidic residues. Low complexity predominate over residues 801–815 (SRSSLDYSSDSEQSS). 2 stretches are compositionally biased toward basic and acidic residues: residues 823–870 (QEKE…DHLR) and 885–909 (WDSESNSERDVTKNSKNDSHPSSDK). Ser-866, Ser-887, Ser-889, Ser-891, and Ser-907 each carry phosphoserine. Residues 910–922 (EEGEATSDSESEV) show a composition bias toward acidic residues. A compositionally biased stretch (polar residues) spans 932-969 (TTKSSTNTSLPDDNGAWKSSKQRTSTSDSEGSCSNSEN). Basic residues predominate over residues 988–1013 (EHTKKVKEKLKGKKDKKHKAPKRKQA). Residues 1022–1031 (FGEEEEEEID) show a composition bias toward acidic residues. A compositionally biased stretch (basic and acidic residues) spans 1032–1072 (DKQVTQESKEKKVSENNETIKDNILKTEKSSEEDLSGKHDT). Residue Lys-1057 forms a Glycyl lysine isopeptide (Lys-Gly) (interchain with G-Cter in SUMO2) linkage. Ser-1077 and Ser-1146 each carry phosphoserine. Residues 1129-1156 (MEICTPDRSSPAKVEETSPLGNARLDTP) are disordered. A Phosphothreonine modification is found at Thr-1155. Lys-1163 is covalently cross-linked (Glycyl lysine isopeptide (Lys-Gly) (interchain with G-Cter in SUMO2)). Positions 1169 to 1215 (EHPQAEVVKQESSMSESKVLGEVGKQDSSSASLASAGESTGKKEVAE) are disordered. Lys-1177 is covalently cross-linked (Glycyl lysine isopeptide (Lys-Gly) (interchain with G-Cter in SUMO1); alternate). A Glycyl lysine isopeptide (Lys-Gly) (interchain with G-Cter in SUMO2); alternate cross-link involves residue Lys-1177. The residue at position 1203 (Ser-1203) is a Phosphoserine. Glycyl lysine isopeptide (Lys-Gly) (interchain with G-Cter in SUMO2) cross-links involve residues Lys-1216, Lys-1225, and Lys-1258. The interval 1251 to 1462 (LTTVPEMKPQ…RSPSESSRYS (212 aa)) is disordered. Residues 1311–1348 (SRSPSRSRSKSETKSRHRTRSVSYSHSRSRSRSSTSSY) form an arg/Ser tandem repeat-rich region. Composition is skewed to low complexity over residues 1331–1351 (SVSYSHSRSRSRSSTSSYRSR) and 1359–1376 (RGWYSRGRTRSRSSSYRS). The segment covering 1377–1388 (YKSHRTSSRSRS) has biased composition (basic residues). Residues 1389–1410 (RSSSYDPHSRSRSYTYDSYYSR) are compositionally biased toward low complexity. Positions 1425–1435 (RGRSYNRRSRS) are enriched in basic residues.

The protein resides in the cell membrane. The catalysed reaction is [protein]-peptidylproline (omega=180) = [protein]-peptidylproline (omega=0). Its activity is regulated as follows. Inhibited by cyclosporin A (CsA). In terms of biological role, PPIase that catalyzes the cis-trans isomerization of proline imidic peptide bonds in oligopeptides and may therefore assist protein folding. Component of a putative tumor-recognition complex involved in the function of NK cells. The chain is NK-tumor recognition protein from Homo sapiens (Human).